Here is a 212-residue protein sequence, read N- to C-terminus: MERLLVLVRHGQSEWNLRNLFTGWRDPDLTERGVAEARAAGRGLKRDGYGFDVAFTSALIRAQRTCALVLEEMGLSEIPILRERALNERDYGDLSGLNKDEARARWGDAQVHAWRRGYDVRPPGGESLKDTAARVLPCYVATILPRVMAGQRVLVAAHGNSLRALVMVLDGLTEAQVPDLQIRTGVPLVYRLNADTTVASKTVLDQDVDAGR.

Substrate is bound by residues 9-16 (RHGQSEWN), 22-23 (TG), R61, 88-91 (ERDY), K99, 115-116 (RR), and 159-160 (GN). The active-site Tele-phosphohistidine intermediate is the H10. The Proton donor/acceptor role is filled by E88.

Belongs to the phosphoglycerate mutase family. BPG-dependent PGAM subfamily. As to quaternary structure, homodimer.

The enzyme catalyses (2R)-2-phosphoglycerate = (2R)-3-phosphoglycerate. The protein operates within carbohydrate degradation; glycolysis; pyruvate from D-glyceraldehyde 3-phosphate: step 3/5. In terms of biological role, catalyzes the interconversion of 2-phosphoglycerate and 3-phosphoglycerate. This Methylobacterium radiotolerans (strain ATCC 27329 / DSM 1819 / JCM 2831 / NBRC 15690 / NCIMB 10815 / 0-1) protein is 2,3-bisphosphoglycerate-dependent phosphoglycerate mutase.